Here is a 215-residue protein sequence, read N- to C-terminus: Nucleoredoxin-like protein 1 (215 aa).

Positions 1-165 (MADLFLDKIL…VSEIIDRSFL (165 aa)) constitute a Thioredoxin; atypical domain. Residues 185 to 194 (IKYKDETTNE) show a composition bias toward basic and acidic residues. The segment at 185 to 215 (IKYKDETTNEKKKRKHCDDEDEGGGGGTEFF) is disordered.

This sequence belongs to the nucleoredoxin family.

Its subcellular location is the cell projection. The protein localises to the cilium. It is found in the photoreceptor outer segment. Plays an important role in retinal cone photoreceptor survival. May play a role in cone cell viability, slowing down cone degeneration, does not seem to play a role in degenerating rods. The sequence is that of Nucleoredoxin-like protein 1 (nxnl1) from Xenopus laevis (African clawed frog).